Reading from the N-terminus, the 125-residue chain is Large ribosomal subunit protein bL12 (125 aa).

It belongs to the bacterial ribosomal protein bL12 family. In terms of assembly, homodimer. Part of the ribosomal stalk of the 50S ribosomal subunit. Forms a multimeric L10(L12)X complex, where L10 forms an elongated spine to which 2 to 4 L12 dimers bind in a sequential fashion. Binds GTP-bound translation factors.

Forms part of the ribosomal stalk which helps the ribosome interact with GTP-bound translation factors. Is thus essential for accurate translation. This Helicobacter pylori (strain P12) protein is Large ribosomal subunit protein bL12.